Reading from the N-terminus, the 246-residue chain is 1-(5-phosphoribosyl)-5-[(5-phosphoribosylamino)methylideneamino] imidazole-4-carboxamide isomerase (246 aa).

The Proton acceptor role is filled by D7. D130 (proton donor) is an active-site residue.

It belongs to the HisA/HisF family.

Its subcellular location is the cytoplasm. The catalysed reaction is 1-(5-phospho-beta-D-ribosyl)-5-[(5-phospho-beta-D-ribosylamino)methylideneamino]imidazole-4-carboxamide = 5-[(5-phospho-1-deoxy-D-ribulos-1-ylimino)methylamino]-1-(5-phospho-beta-D-ribosyl)imidazole-4-carboxamide. It participates in amino-acid biosynthesis; L-histidine biosynthesis; L-histidine from 5-phospho-alpha-D-ribose 1-diphosphate: step 4/9. The chain is 1-(5-phosphoribosyl)-5-[(5-phosphoribosylamino)methylideneamino] imidazole-4-carboxamide isomerase from Sodalis glossinidius (strain morsitans).